Consider the following 40-residue polypeptide: Photosystem II reaction center protein Psb30 (40 aa).

Residues 12-32 traverse the membrane as a helical segment; the sequence is VIFQLTSVALIIIAGPAVIFV.

It belongs to the Psb30/Ycf12 family. PSII is composed of 1 copy each of membrane proteins PsbA, PsbB, PsbC, PsbD, PsbE, PsbF, PsbH, PsbI, PsbJ, PsbK, PsbL, PsbM, PsbT, PsbX, PsbY, PsbZ, Psb30/Ycf12, peripheral proteins PsbO, CyanoQ (PsbQ), PsbU, PsbV and a large number of cofactors. It forms dimeric complexes.

It is found in the cellular thylakoid membrane. Its function is as follows. A core subunit of photosystem II (PSII), probably helps stabilize the reaction center. This is Photosystem II reaction center protein Psb30 from Nostoc sp. (strain PCC 7120 / SAG 25.82 / UTEX 2576).